We begin with the raw amino-acid sequence, 95 residues long: UPF0235 protein Ssed_1229 (95 aa).

Belongs to the UPF0235 family.

The chain is UPF0235 protein Ssed_1229 from Shewanella sediminis (strain HAW-EB3).